Reading from the N-terminus, the 342-residue chain is Aspartate carbamoyltransferase catalytic subunit (342 aa).

Carbamoyl phosphate-binding residues include arginine 54 and threonine 55. Lysine 82 is a binding site for L-aspartate. Arginine 104, histidine 134, and glutamine 137 together coordinate carbamoyl phosphate. Residues arginine 177 and arginine 232 each coordinate L-aspartate. Carbamoyl phosphate contacts are provided by glycine 277 and proline 278.

It belongs to the aspartate/ornithine carbamoyltransferase superfamily. ATCase family. Heterododecamer (2C3:3R2) of six catalytic PyrB chains organized as two trimers (C3), and six regulatory PyrI chains organized as three dimers (R2).

The catalysed reaction is carbamoyl phosphate + L-aspartate = N-carbamoyl-L-aspartate + phosphate + H(+). It functions in the pathway pyrimidine metabolism; UMP biosynthesis via de novo pathway; (S)-dihydroorotate from bicarbonate: step 2/3. Functionally, catalyzes the condensation of carbamoyl phosphate and aspartate to form carbamoyl aspartate and inorganic phosphate, the committed step in the de novo pyrimidine nucleotide biosynthesis pathway. This Pseudarthrobacter chlorophenolicus (strain ATCC 700700 / DSM 12829 / CIP 107037 / JCM 12360 / KCTC 9906 / NCIMB 13794 / A6) (Arthrobacter chlorophenolicus) protein is Aspartate carbamoyltransferase catalytic subunit.